Here is a 905-residue protein sequence, read N- to C-terminus: Probable coatomer subunit gamma (905 aa).

5 HEAT repeats span residues 265–302 (TQFRDQMVPFLHGWLKSKGDMVNLEVARNMVRLKNISD), 303–340 (DDLQPVVSVLKIFLSSHRSATRFSAIRTLNELAMTRPH), 374–412 (DESVDRLMKQIVTFMSDISDNFKIIVVDAIRSLCLKFPR), 414–450 (QDSMLTFLSNILCDEGGYEFKRAAVDAISDMIKYIPE), and 525–563 (KFVQRSVKVILTRCLEDADDEVRDRAAFSVKALEDRDAF). Phosphoserine is present on Ser604.

This sequence belongs to the COPG family. Oligomeric complex that consists of at least the alpha, beta, beta', gamma, delta, epsilon and zeta subunits.

It is found in the cytoplasm. The protein resides in the golgi apparatus membrane. The protein localises to the cytoplasmic vesicle. Its subcellular location is the COPI-coated vesicle membrane. Functionally, the coatomer is a cytosolic protein complex that binds to dilysine motifs and reversibly associates with Golgi non-clathrin-coated vesicles, which further mediate biosynthetic protein transport from the ER, via the Golgi up to the trans Golgi network. Coatomer complex is required for budding from Golgi membranes, and is essential for the retrograde Golgi-to-ER transport of dilysine-tagged proteins. The chain is Probable coatomer subunit gamma (sec21) from Schizosaccharomyces pombe (strain 972 / ATCC 24843) (Fission yeast).